A 1041-amino-acid polypeptide reads, in one-letter code: FHIP family protein GF15501 (1041 aa).

Disordered stretches follow at residues 797–856 (RKGN…NKRR) and 907–987 (SNSS…SEPV). The residue at position 803 (Ser803) is a Phosphoserine. Positions 808 to 824 (NLQQQQALNPAQQQGQQ) are enriched in low complexity. Composition is skewed to polar residues over residues 825-843 (RSAYATLSAATPVQATPTS) and 907-933 (SNSSSESRGFAPGQQSAGTCETSLSTQ). The segment covering 942–973 (SGSSSNSSMGGSSQTLSAHSNATTTHSSSTLH) has biased composition (low complexity).

Belongs to the FHIP family.

In Drosophila ananassae (Fruit fly), this protein is FHIP family protein GF15501.